Here is a 96-residue protein sequence, read N- to C-terminus: Large ribosomal subunit protein bL21 (96 aa).

Over residues 73-84 (KRRKRYQSRNGH) the composition is skewed to basic residues. Residues 73–96 (KRRKRYQSRNGHRQQMTQIEVVSL) are disordered. Over residues 85–96 (RQQMTQIEVVSL) the composition is skewed to polar residues.

It belongs to the bacterial ribosomal protein bL21 family. As to quaternary structure, part of the 50S ribosomal subunit. Contacts protein L20.

In terms of biological role, this protein binds to 23S rRNA in the presence of protein L20. This chain is Large ribosomal subunit protein bL21, found in Chlorobium phaeovibrioides (strain DSM 265 / 1930) (Prosthecochloris vibrioformis (strain DSM 265)).